The primary structure comprises 398 residues: Small ribosomal subunit protein uS3m (398 aa).

The protein belongs to the universal ribosomal protein uS3 family. As to quaternary structure, component of the mitochondrial small ribosomal subunit (mt-SSU). Mature yeast 74S mitochondrial ribosomes consist of a small (37S) and a large (54S) subunit. The 37S small subunit contains a 15S ribosomal RNA (15S mt-rRNA) and 34 different proteins. The 54S large subunit contains a 21S rRNA (21S mt-rRNA) and 46 different proteins. uS3m, uS4m and uS5m form the narrow entry site of the mRNA channel.

The protein resides in the mitochondrion. Component of the mitochondrial ribosome (mitoribosome), a dedicated translation machinery responsible for the synthesis of mitochondrial genome-encoded proteins, including at least some of the essential transmembrane subunits of the mitochondrial respiratory chain. The mitoribosomes are attached to the mitochondrial inner membrane and translation products are cotranslationally integrated into the membrane. uS3m is essential for mitochondrial protein synthesis and required for the maturation of small ribosomal subunits. The polypeptide is Small ribosomal subunit protein uS3m (VAR1) (Saccharomyces cerevisiae (strain ATCC 204508 / S288c) (Baker's yeast)).